The chain runs to 212 residues: Large ribosomal subunit protein bL25 (212 aa).

The segment at 190 to 212 (IAEAGDALAEPEVISKGSGEADE) is disordered.

The protein belongs to the bacterial ribosomal protein bL25 family. CTC subfamily. As to quaternary structure, part of the 50S ribosomal subunit; part of the 5S rRNA/L5/L18/L25 subcomplex. Contacts the 5S rRNA. Binds to the 5S rRNA independently of L5 and L18.

This is one of the proteins that binds to the 5S RNA in the ribosome where it forms part of the central protuberance. This Rhodopirellula baltica (strain DSM 10527 / NCIMB 13988 / SH1) protein is Large ribosomal subunit protein bL25.